Consider the following 568-residue polypeptide: Phosphoprotein (568 aa).

Positions 1–24 (MDQDAFFFERDPEAEGEAPRKQES) are disordered. Residues 7-24 (FFERDPEAEGEAPRKQES) are compositionally biased toward basic and acidic residues. The interval 33-41 (DVVLSYKPT) is N0 binding. The interval 45–324 (EDRSWLHNII…SNEEGTSNTS (280 aa)) is disordered. 3 stretches are compositionally biased toward basic and acidic residues: residues 56-105 (NPKE…HARI), 129-144 (GDER…PNER), and 151-167 (PTDE…KREE). A compositionally biased stretch (polar residues) spans 179–216 (GSTSLSDDGEGRTNNNGRSMETSSTHSTRITDVITNPS). Residues 239 to 253 (TRSERTQNSELHKST) are compositionally biased toward basic and acidic residues. A compositionally biased stretch (low complexity) spans 295 to 304 (TTNNANNNAK). Residues 344–411 (FELSRRASHQ…SSRDLHKRFS (68 aa)) form a multimerization region. The stretch at 387–416 (EENRTLLKQIQEEIDSSRDLHKRFSEYQKE) forms a coiled coil. The segment at 412–445 (EYQKEQNSLMMANLSTLHIITDRGGKTGDPSDTT) is l protein binding. Disordered regions lie at residues 434 to 455 (RGGK…TKGK) and 493 to 513 (PVLE…LIPS). Over residues 441–450 (PSDTTRSPSV) the composition is skewed to polar residues. An interaction with the nucleocapsid (N-RNA) region spans residues 479 to 568 (DLIREDELRE…FEEDIDSLTN (90 aa)).

The protein belongs to the respirovirus P protein family. In terms of assembly, homotetramer. Interacts (via multimerization domain) with polymerase L; this interaction forms the polymerase complex. Interacts (via N-terminus) with N0; this interaction allows P to chaperon N0 before encapsidation and form the N-P complex. Interacts (via C-terminus) with N-RNA template; this interaction positions the polymerase on the template.

Functionally, essential cofactor of the RNA polymerase L that plays a central role in the transcription and replication by forming the polymerase complex with RNA polymerase L and recruiting L to the genomic N-RNA template for RNA synthesis. Also plays a central role in the encapsidation of nascent RNA chains by forming the encapsidation complex with the nucleocapsid protein N (N-P complex). Acts as a chaperone for newly synthesized free N protein, so-called N0, allowing encapsidation of nascent RNA chains during replication. The nucleoprotein protein N prevents excessive phosphorylation of P, which leads to down-regulation of viral transcription/ replication. Participates, together with N, in the formation of viral factories (viroplasms), which are large inclusions in the host cytoplasm where replication takes place. Recruits host PI4KB and remodel the host endoplasmic reticulum membrane to form viral replication factories. This is Phosphoprotein (P/C) from Homo sapiens (Human).